Here is a 535-residue protein sequence, read N- to C-terminus: Bifunctional purine biosynthesis protein PurH (535 aa).

Positions 6–151 (TRLPVRRALI…KNHKDVAIVV (146 aa)) constitute an MGS-like domain.

This sequence belongs to the PurH family.

The enzyme catalyses (6R)-10-formyltetrahydrofolate + 5-amino-1-(5-phospho-beta-D-ribosyl)imidazole-4-carboxamide = 5-formamido-1-(5-phospho-D-ribosyl)imidazole-4-carboxamide + (6S)-5,6,7,8-tetrahydrofolate. It catalyses the reaction IMP + H2O = 5-formamido-1-(5-phospho-D-ribosyl)imidazole-4-carboxamide. The protein operates within purine metabolism; IMP biosynthesis via de novo pathway; 5-formamido-1-(5-phospho-D-ribosyl)imidazole-4-carboxamide from 5-amino-1-(5-phospho-D-ribosyl)imidazole-4-carboxamide (10-formyl THF route): step 1/1. Its pathway is purine metabolism; IMP biosynthesis via de novo pathway; IMP from 5-formamido-1-(5-phospho-D-ribosyl)imidazole-4-carboxamide: step 1/1. The protein is Bifunctional purine biosynthesis protein PurH of Pseudomonas putida (strain GB-1).